Here is a 331-residue protein sequence, read N- to C-terminus: D-lactate dehydrogenase (331 aa).

Residues 156-157 (RI), aspartate 176, 206-207 (MP), 233-235 (TAR), and aspartate 259 each bind NAD(+). Residue arginine 235 is part of the active site. Residue glutamate 264 is part of the active site. The active-site Proton donor is histidine 296.

It belongs to the D-isomer specific 2-hydroxyacid dehydrogenase family.

It carries out the reaction (R)-lactate + NAD(+) = pyruvate + NADH + H(+). This Treponema pallidum (strain Nichols) protein is D-lactate dehydrogenase (ldhD).